The chain runs to 441 residues: NADH-quinone oxidoreductase subunit D 1 (441 aa).

This sequence belongs to the complex I 49 kDa subunit family. As to quaternary structure, NDH-1 is composed of 14 different subunits. Subunits NuoB, C, D, E, F, and G constitute the peripheral sector of the complex.

Its subcellular location is the cell membrane. The catalysed reaction is a quinone + NADH + 5 H(+)(in) = a quinol + NAD(+) + 4 H(+)(out). Its function is as follows. NDH-1 shuttles electrons from NADH, via FMN and iron-sulfur (Fe-S) centers, to quinones in the respiratory chain. The immediate electron acceptor for the enzyme in this species is believed to be a menaquinone. Couples the redox reaction to proton translocation (for every two electrons transferred, four hydrogen ions are translocated across the cytoplasmic membrane), and thus conserves the redox energy in a proton gradient. This is NADH-quinone oxidoreductase subunit D 1 from Salinispora tropica (strain ATCC BAA-916 / DSM 44818 / JCM 13857 / NBRC 105044 / CNB-440).